Consider the following 354-residue polypeptide: Replication-associated protein (354 aa).

A CRESS-DNA virus Rep endonuclease domain is found at 11–114; it reads LHRNANTFLT…PLAVFERGTF (104 aa). Residues 18 to 21 carry the RCR-1 motif; it reads FLTY. Positions 52, 60, and 62 each coordinate a divalent metal cation. An RCR-2 motif is present at residues 60–62; the sequence is HLH. The active-site For DNA cleavage activity is Tyr100. The RCR-3 signature appears at 100–103; it reads YILK. Residue Glu104 coordinates a divalent metal cation. The oligomerization stretch occupies residues 174–186; that stretch reads SANKLFPDIQEEF. An ATP-binding site is contributed by 228–235; the sequence is GPTRTGKS. Residues 251-269 form a transactivation region; the sequence is VDWSSYNEDAIYNIVDDIP. Residues 291–302 carry the Nuclear localization signal motif; the sequence is KYGKKKKVQMKS.

It belongs to the geminiviridae Rep protein family. As to quaternary structure, homooligomer. Rep binds to repeated DNA motifs (iterons). Forms the O-complex, which is a Rep-DNA complex involved in the initiation of RCR. Part of the C- and V-complexes which are RepA-Rep-DNA complexes involved in the c-sense and v-sense transcription. The cofactor is Mg(2+). Mn(2+) serves as cofactor.

The protein resides in the host nucleus. Essential for the replication of viral ssDNA. The closed circular ssDNA genome is first converted to a superhelical dsDNA. Rep binds a specific region at the genome origin of replication. It introduces an endonucleolytic nick within the conserved sequence 5'-TAATATTAC-3' in the intergenic region of the genome present in all geminiviruses, thereby initiating the rolling circle replication (RCR). Following cleavage, binds covalently to the 5'-phosphate of DNA as a tyrosyl ester. The cleavage gives rise to a free 3'-OH that serves as a primer for the cellular DNA polymerase. The polymerase synthesizes the (+) strand DNA by rolling circle mechanism. After one round of replication, a Rep-catalyzed nucleotidyl transfer reaction releases a circular single-stranded virus genome, thereby terminating the replication. Displays origin-specific DNA cleavage, nucleotidyl transferase, ATPase and helicase activities. Acts as an inhibitor of C-sense gene transcription. This is Replication-associated protein from Avena sativa (Oat).